A 387-amino-acid chain; its full sequence is Alanine racemase (387 aa).

The active-site Proton acceptor; specific for D-alanine is Lys-48. Residue Lys-48 is modified to N6-(pyridoxal phosphate)lysine. Substrate is bound at residue Arg-146. Catalysis depends on Tyr-267, which acts as the Proton acceptor; specific for L-alanine. Met-315 is a substrate binding site.

It belongs to the alanine racemase family. It depends on pyridoxal 5'-phosphate as a cofactor.

It carries out the reaction L-alanine = D-alanine. It functions in the pathway amino-acid biosynthesis; D-alanine biosynthesis; D-alanine from L-alanine: step 1/1. Functionally, catalyzes the interconversion of L-alanine and D-alanine. May also act on other amino acids. The polypeptide is Alanine racemase (alr) (Methylacidiphilum infernorum (isolate V4) (Methylokorus infernorum (strain V4))).